Here is a 156-residue protein sequence, read N- to C-terminus: Small ribosomal subunit protein uS7c (156 aa).

It belongs to the universal ribosomal protein uS7 family. Part of the 30S ribosomal subunit.

The protein localises to the plastid. It is found in the chloroplast. Its function is as follows. One of the primary rRNA binding proteins, it binds directly to 16S rRNA where it nucleates assembly of the head domain of the 30S subunit. The polypeptide is Small ribosomal subunit protein uS7c (rps7) (Tupiella akineta (Green alga)).